Consider the following 135-residue polypeptide: Fluoride-specific ion channel FluC (135 aa).

Helical transmembrane passes span 7–27 (IAAI…LGLA), 37–57 (IGTL…IAYV), 70–90 (FMIT…AELF), and 105–125 (LGLH…TIGL). Residues Gly77 and Ser80 each coordinate Na(+).

It belongs to the fluoride channel Fluc/FEX (TC 1.A.43) family.

The protein localises to the cell inner membrane. The catalysed reaction is fluoride(in) = fluoride(out). With respect to regulation, na(+) is not transported, but it plays an essential structural role and its presence is essential for fluoride channel function. In terms of biological role, fluoride-specific ion channel. Important for reducing fluoride concentration in the cell, thus reducing its toxicity. The polypeptide is Fluoride-specific ion channel FluC (Xanthomonas oryzae pv. oryzae (strain MAFF 311018)).